A 163-amino-acid polypeptide reads, in one-letter code: Nucleotide-binding protein YajQ (163 aa).

It belongs to the YajQ family.

Functionally, nucleotide-binding protein. In Salmonella typhi, this protein is Nucleotide-binding protein YajQ.